The following is a 420-amino-acid chain: GDP-mannose transporter 2 (420 aa).

Polar residues predominate over residues 1 to 11; sequence MASYTPSSSRP. The segment at 1–21 is disordered; that stretch reads MASYTPSSSRPHTPLGLSPRG. The Cytoplasmic portion of the chain corresponds to 1 to 76; that stretch reads MASYTPSSSR…KAKKEEVCMP (76 aa). Residues 77 to 97 traverse the membrane as a helical segment; sequence ASTTVLPILSYCVASIMMTVV. Residues 98-106 are Lumenal-facing; that stretch reads NKFVVSGRQ. Residues 107 to 127 form a helical membrane-spanning segment; sequence FTMTFLLLAIQSFVCVACVWL. Residues 128 to 145 are Cytoplasmic-facing; that stretch reads AKRIGVINFRDWDMNDAK. A helical transmembrane segment spans residues 146 to 168; that stretch reads AWFPVSSLLVAVIYTGSKSLQFL. Residues 169 to 171 are Lumenal-facing; that stretch reads SIP. The chain crosses the membrane as a helical span at residues 172–194; sequence VYTIFKNLTIILIAYGEVIWFGG. Residues 195–200 lie on the Cytoplasmic side of the membrane; the sequence is HVTPLT. Residues 201–223 form a helical membrane-spanning segment; the sequence is LCSFFLMVGSSVIAAWADISTTL. Residues 224–251 are Lumenal-facing; the sequence is SKLSAGVAVVDPISGADVPLSSISVMDT. A helical membrane pass occupies residues 252–272; that stretch reads MNVGYLWMFINCLASAGYVLF. The Cytoplasmic segment spans residues 273-293; the sequence is MRKRIKVTGFKDWDSMFYNNL. A helical membrane pass occupies residues 294–314; sequence LSIPVLFVFSLIIEDWGAASF. Over 315–323 the chain is Lumenal; it reads SRNFPEEGR. The helical transmembrane segment at 324–344 threads the bilayer; that stretch reads AFLLSAIAFSGAAAVFISYST. Over 345–355 the chain is Cytoplasmic; sequence AWCVRICGATT. Residues 356–376 traverse the membrane as a helical segment; sequence YSLVGALNKLPVAASGILFFG. The Lumenal portion of the chain corresponds to 377 to 378; the sequence is DP. Residues 379-399 form a helical membrane-spanning segment; that stretch reads VNFGNVSAILVGGVSGIVYAV. The Cytoplasmic segment spans residues 400–420; that stretch reads AKTNQAKVEKSKQARGGESKA.

The protein belongs to the TPT transporter family. SLC35D subfamily. As to quaternary structure, homooligomer.

The protein resides in the golgi apparatus membrane. It is found in the cytoplasmic vesicle membrane. The protein localises to the endoplasmic reticulum membrane. In terms of biological role, involved in the import of GDP-mannose from the cytoplasm into the Golgi lumen. In Cryptococcus neoformans var. neoformans serotype D (strain B-3501A) (Filobasidiella neoformans), this protein is GDP-mannose transporter 2 (GMT2).